The following is a 158-amino-acid chain: NAD(P)H-quinone oxidoreductase subunit J, chloroplastic (158 aa).

The protein belongs to the complex I 30 kDa subunit family. In terms of assembly, NDH is composed of at least 16 different subunits, 5 of which are encoded in the nucleus.

It is found in the plastid. The protein resides in the chloroplast thylakoid membrane. It catalyses the reaction a plastoquinone + NADH + (n+1) H(+)(in) = a plastoquinol + NAD(+) + n H(+)(out). The catalysed reaction is a plastoquinone + NADPH + (n+1) H(+)(in) = a plastoquinol + NADP(+) + n H(+)(out). Functionally, NDH shuttles electrons from NAD(P)H:plastoquinone, via FMN and iron-sulfur (Fe-S) centers, to quinones in the photosynthetic chain and possibly in a chloroplast respiratory chain. The immediate electron acceptor for the enzyme in this species is believed to be plastoquinone. Couples the redox reaction to proton translocation, and thus conserves the redox energy in a proton gradient. The chain is NAD(P)H-quinone oxidoreductase subunit J, chloroplastic from Citrus sinensis (Sweet orange).